The sequence spans 64 residues: Large ribosomal subunit protein bL32 (64 aa).

The interval 1–23 (MAVQKSRVTPSRRGQRRSHDALA) is disordered.

The protein belongs to the bacterial ribosomal protein bL32 family.

This chain is Large ribosomal subunit protein bL32, found in Xylella fastidiosa (strain M23).